Reading from the N-terminus, the 368-residue chain is Chorismate synthase (368 aa).

NADP(+) contacts are provided by arginine 48 and arginine 54. FMN-binding positions include 125–127, 238–239, glycine 278, 293–297, and arginine 319; these read RSS, NA, and KPTSS.

Belongs to the chorismate synthase family. As to quaternary structure, homotetramer. It depends on FMNH2 as a cofactor.

It catalyses the reaction 5-O-(1-carboxyvinyl)-3-phosphoshikimate = chorismate + phosphate. Its pathway is metabolic intermediate biosynthesis; chorismate biosynthesis; chorismate from D-erythrose 4-phosphate and phosphoenolpyruvate: step 7/7. Functionally, catalyzes the anti-1,4-elimination of the C-3 phosphate and the C-6 proR hydrogen from 5-enolpyruvylshikimate-3-phosphate (EPSP) to yield chorismate, which is the branch point compound that serves as the starting substrate for the three terminal pathways of aromatic amino acid biosynthesis. This reaction introduces a second double bond into the aromatic ring system. The protein is Chorismate synthase of Methylibium petroleiphilum (strain ATCC BAA-1232 / LMG 22953 / PM1).